We begin with the raw amino-acid sequence, 184 residues long: uncharacterized protein (184 aa).

The Nudix hydrolase domain maps to 36-164 (LRHRATYIVV…TPDSLKALAL (129 aa)). The short motif at 73 to 95 (GGVVQADEQLLESARREAEEELG) is the Nudix box element. Mg(2+)-binding residues include Glu89 and Glu93.

It belongs to the Nudix hydrolase family. The cofactor is Mg(2+).

This is an uncharacterized protein from Salmonella typhi.